We begin with the raw amino-acid sequence, 80 residues long: Conotoxin Pu11.1 (80 aa).

Positions 1–19 (MKLVLAIVLILMLLSLSTG) are cleaved as a signal peptide. A propeptide spanning residues 20–42 (AEMSDNHASRSATALTDRLLGPK) is cleaved from the precursor. Cystine bridges form between Cys46–Cys60, Cys53–Cys65, Cys59–Cys72, and Cys64–Cys79.

Belongs to the conotoxin I3 superfamily. Expressed by the venom duct.

The protein resides in the secreted. The protein is Conotoxin Pu11.1 of Conus pulicarius (Flea-bitten cone).